Reading from the N-terminus, the 432-residue chain is MERRRITSAARRSYISSGEMMVGGLAPGRRLGPGTRLSLARMPPPLPTRVDFSLAGALNAGFKETRASERAEMMELNDRFASYIEKVRFLEQQNKALAAELNQLRAKEPTKLADVYQAELRELRLRLDQLTANSARLEVERDNLAQDLGTVRQKLQDETNLRLEAENNLAAYRQEADEATLARLDLERKTESLEEEIRFLRKIHEEEVRELQEQLARQQVHVELDMAKPDLTAALKEIRTQYEAMASSNMHEAEEWYRSKFADLTDAAARNAELLRQAKHEANDYRRQLQSLTCDLESLRGTNESLERQMREQEERHAREAASYQEALARLEEEGQSLKDEMARHLQEYQDLLNVKLALDIEIATYRKLLEGEENRITIPVQTFSNLQIRETSLDTKSVSEGHLKRNIVVKTVEMRDGEVIKESKQEHKDVM.

Residues 1-72 (MERRRITSAA…KETRASERAE (72 aa)) form a head region. Phosphothreonine; by AURKB and ROCK1 is present on T7. R12 bears the Omega-N-methylarginine mark. S13 carries the post-translational modification Phosphoserine; by AURKB and ROCK1. Residues R30 and R36 each carry the citrulline modification. A Phosphoserine; by AURKB and ROCK1 modification is found at S38. The IF rod domain occupies 69-377 (ERAEMMELND…KLLEGEENRI (309 aa)). Residues 73–104 (MMELNDRFASYIEKVRFLEQQNKALAAELNQL) form a coil 1A region. S82 bears the Phosphoserine mark. The tract at residues 105–115 (RAKEPTKLADV) is linker 1. T110 and T150 each carry phosphothreonine. Positions 116–214 (YQAELRELRL…EEEVRELQEQ (99 aa)) are coil 1B. The segment at 215-230 (LARQQVHVELDMAKPD) is linker 12. The coil 2A stretch occupies residues 231-252 (LTAALKEIRTQYEAMASSNMHE). The linker 2 stretch occupies residues 253–256 (AEEW). The tract at residues 257-377 (YRSKFADLTD…KLLEGEENRI (121 aa)) is coil 2B. At R270 the chain carries Citrulline. The residue at position 323 (S323) is a Phosphoserine. The tract at residues 378–432 (TIPVQTFSNLQIRETSLDTKSVSEGHLKRNIVVKTVEMRDGEVIKESKQEHKDVM) is tail. T383 is subject to Phosphothreonine. Phosphoserine is present on S385. A citrulline mark is found at R406 and R416.

This sequence belongs to the intermediate filament family. In terms of assembly, interacts with SYNM. Post-translationally, phosphorylated by PKN1.

The protein localises to the cytoplasm. GFAP, a class-III intermediate filament, is a cell-specific marker that, during the development of the central nervous system, distinguishes astrocytes from other glial cells. This chain is Glial fibrillary acidic protein (GFAP), found in Pongo abelii (Sumatran orangutan).